We begin with the raw amino-acid sequence, 489 residues long: Dipeptide and tripeptide permease B (489 aa).

The Cytoplasmic segment spans residues 1-27 (MNTTAPTGLLQQPRPFFMIFFVELWER). A helical membrane pass occupies residues 28–48 (FGYYGVQGILAVFFVKQLGFS). The Periplasmic portion of the chain corresponds to 49 to 52 (QEQA). The helical transmembrane segment at 53–73 (FITFGAFAALVYGLISIGGYV) threads the bilayer. The Cytoplasmic portion of the chain corresponds to 74–82 (GDHLLGTKR). The chain crosses the membrane as a helical span at residues 83–103 (TLVLGAIVLAIGYFMTGMSLL). Over 104-106 (NPD) the chain is Periplasmic. Residues 107-127 (LIFIALGTIAVGNGLFKANPA) traverse the membrane as a helical segment. Residues 128-146 (SLLSKCYQPKDPRLDGAFT) are Cytoplasmic-facing. The chain crosses the membrane as a helical span at residues 147–167 (LFYMSINIGSLLSLSLAPVIA). At 168–172 (DKFGY) the chain is on the periplasmic side. Residues 173-193 (AVTYNLCGAGLIVALLVYFAC) form a helical membrane-spanning segment. The Cytoplasmic portion of the chain corresponds to 194–214 (RGMVKNIGSEPDHKPLRFRNL). The chain crosses the membrane as a helical span at residues 215-235 (LLVLLGTVVMIFLCAWLMHNV). Position 236 (Lys-236) is a topological domain, periplasmic. A helical membrane pass occupies residues 237–257 (IANLVLIVLSIVVTIFFFREA). The Cytoplasmic segment spans residues 258-267 (FRLDKTGRNK). The chain crosses the membrane as a helical span at residues 268 to 288 (MFVAFILMIEAVLFYILYAQM). Residues 289–315 (PTSLNFFAINNVHHEILGFAINPVSFQ) are Periplasmic-facing. A helical transmembrane segment spans residues 316-338 (ALNPFWVVVASPVLAAIYTRLGS). Residues 339–348 (KGKDLTMPMK) lie on the Cytoplasmic side of the membrane. The chain crosses the membrane as a helical span at residues 349-369 (FTLGMFLCALGFLTAAAGMWF). The Periplasmic segment spans residues 370–379 (ADAQGLTSPW). The chain crosses the membrane as a helical span at residues 380–400 (FIVLVYLFQSLGELLISALGL). At 401–410 (AMVAALVPQH) the chain is on the cytoplasmic side. A helical transmembrane segment spans residues 411 to 431 (LMGFILGMWFLTQAAAFLLGG). Topologically, residues 432 to 454 (YVATFTAVPENITDPLQTLPIYT) are periplasmic. A helical membrane pass occupies residues 455–475 (GVFSKIGLVTLAVTVVMAIMV). Over 476–489 (PWLNRMINTPGTEQ) the chain is Cytoplasmic.

It belongs to the major facilitator superfamily. Proton-dependent oligopeptide transporter (POT/PTR) (TC 2.A.17) family. DtpB subfamily.

It is found in the cell inner membrane. In terms of biological role, proton-dependent permease that transports di- and tripeptides. This is Dipeptide and tripeptide permease B from Salmonella typhimurium (strain LT2 / SGSC1412 / ATCC 700720).